The sequence spans 452 residues: Chromosomal replication initiator protein DnaA (452 aa).

Residues 1-85 are domain I, interacts with DnaA modulators; sequence MSTTAWQKCL…IEVGSKPVEA (85 aa). The domain II stretch occupies residues 85–115; it reads AVDTPAETIVTSSSTAPLKSAPKKAVDYKSS. Residues 116 to 332 form a domain III, AAA+ region region; it reads HLNKKFVFDS…GALRRVIANA (217 aa). Positions 160, 162, 163, and 164 each coordinate ATP. Residues 333–452 are domain IV, binds dsDNA; it reads HFTGKPITIE…YKNLMRILSS (120 aa).

It belongs to the DnaA family. As to quaternary structure, oligomerizes as a right-handed, spiral filament on DNA at oriC.

Its subcellular location is the cytoplasm. Plays an essential role in the initiation and regulation of chromosomal replication. ATP-DnaA binds to the origin of replication (oriC) to initiate formation of the DNA replication initiation complex once per cell cycle. Binds the DnaA box (a 9 base pair repeat at the origin) and separates the double-stranded (ds)DNA. Forms a right-handed helical filament on oriC DNA; dsDNA binds to the exterior of the filament while single-stranded (ss)DNA is stabiized in the filament's interior. The ATP-DnaA-oriC complex binds and stabilizes one strand of the AT-rich DNA unwinding element (DUE), permitting loading of DNA polymerase. After initiation quickly degrades to an ADP-DnaA complex that is not apt for DNA replication. Binds acidic phospholipids. The chain is Chromosomal replication initiator protein DnaA from Legionella pneumophila (strain Paris).